The following is a 320-amino-acid chain: ATP-dependent 6-phosphofructokinase (320 aa).

Glycine 11 contributes to the ATP binding site. Arginine 21–arginine 25 provides a ligand contact to ADP. ATP contacts are provided by residues arginine 72 to cysteine 73 and glycine 102 to serine 105. Mg(2+) is bound at residue aspartate 103. Threonine 125–aspartate 127 is a binding site for substrate. Catalysis depends on aspartate 127, which acts as the Proton acceptor. Arginine 154 provides a ligand contact to ADP. Residues arginine 162 and methionine 169–arginine 171 each bind substrate. ADP-binding positions include glycine 185–glutamate 187 and lysine 214–histidine 216. Substrate-binding positions include glutamate 223, arginine 244, and histidine 250–arginine 253.

It belongs to the phosphofructokinase type A (PFKA) family. ATP-dependent PFK group I subfamily. Prokaryotic clade 'B1' sub-subfamily. In terms of assembly, homotetramer. Mg(2+) is required as a cofactor.

The protein localises to the cytoplasm. It carries out the reaction beta-D-fructose 6-phosphate + ATP = beta-D-fructose 1,6-bisphosphate + ADP + H(+). The protein operates within carbohydrate degradation; glycolysis; D-glyceraldehyde 3-phosphate and glycerone phosphate from D-glucose: step 3/4. Its activity is regulated as follows. Allosterically activated by ADP and other diphosphonucleosides, and allosterically inhibited by phosphoenolpyruvate. In terms of biological role, catalyzes the phosphorylation of D-fructose 6-phosphate to fructose 1,6-bisphosphate by ATP, the first committing step of glycolysis. In Clostridium botulinum (strain Eklund 17B / Type B), this protein is ATP-dependent 6-phosphofructokinase.